A 278-amino-acid polypeptide reads, in one-letter code: Sulfur carrier protein FdhD (278 aa).

Residue Cys121 is the Cysteine persulfide intermediate of the active site. Position 260-265 (260-265 (FCKPGR)) interacts with Mo-bis(molybdopterin guanine dinucleotide).

It belongs to the FdhD family.

It is found in the cytoplasm. Required for formate dehydrogenase (FDH) activity. Acts as a sulfur carrier protein that transfers sulfur from IscS to the molybdenum cofactor prior to its insertion into FDH. The sequence is that of Sulfur carrier protein FdhD from Salmonella heidelberg (strain SL476).